Reading from the N-terminus, the 558-residue chain is MDFFKKEILDWSVYLSLHYIARVCSNSSTSHIIQDYNLIRTYEKVDKTIVDFLSRLPNLFHILEYGENILHIYSMDDANTNIIIFFLDRVLNINKNGSFIHNLRLSSSINIKEYVYQLVNNDHPDNRIRLMLENGRRTRHFLSYISDTVNIYICILINHGFYIDAEDSYGCTLLHRCIYHYKKSESESYNELIKILLNNGSDVDKKDTYGNTPFILLCKHDINNVELFEICLENANIDSVDFNRYTPLHYVSCRNKYDFVKLLISKGANVNARNKFGTTPFYCGIIHGISLIKLYLESDTELEIDNEHIVRHLIIFDAVESLDYLLSRGVIDINYRTIYNETSIYDAVSYNAYNTLVYLLNRNGDFETITTSGCTCISEAVANNNKIIMEVLLSKRPSLKIMIQSMIAITKNKQHNADLLKMCIKYTACMTDYDTLIDVQSLQQYKWYILKCFDEIDIMKRCYIKNKTVFQLVFCIKDINTLMRYGKHPSFVKCTSLDVYGSRVRNIIASIRYRQRLISLLSKKLDAGDKWSCFPNEIKYKILENFNDNELSTYLKIL.

ANK repeat units follow at residues 65–95 (YGENILHIYSMDDANTNIIIFFLDRVLNINK), 169–205 (YGCTLLHRCIYHYKKSESESYNELIKILLNNGSDVDK), 209–239 (YGNTPFILLCKHDINNVELFEICLENANIDS), 243–272 (NRYTPLHYVSCRNKYDFVKLLISKGANVNA), 276–304 (FGTTPFYCGIIHGISLIKLYLESDTELEI), 339–368 (YNETSIYDAVSYNAYNTLVYLLNRNGDFET), and 372–401 (SGCTCISEAVANNNKIIMEVLLSKRPSLKI).

This sequence belongs to the orthopoxvirus OPG189 protein family.

In terms of biological role, contributes to viral release without involving rearrangement of host actin. The protein is Ankyrin repeat protein OPG189 (OPG189) of Homo sapiens (Human).